The sequence spans 151 residues: Small ribosomal subunit protein uS11 (151 aa).

Residues 130-151 (EDVTPIPSDSTRRKGGRRGRRL) form a disordered region. Positions 142 to 151 (RKGGRRGRRL) are enriched in basic residues.

It belongs to the universal ribosomal protein uS11 family.

In Aedes aegypti (Yellowfever mosquito), this protein is Small ribosomal subunit protein uS11.